The following is a 368-amino-acid chain: Hydrophobic dipeptide epimerase (368 aa).

Substrate-binding positions include T143 and 168-170; that span reads KIK. Mg(2+)-binding residues include D197, E225, and D253. Residues K277 and 329–331 each bind substrate; that span reads DMD.

The protein belongs to the mandelate racemase/muconate lactonizing enzyme family. It depends on Mg(2+) as a cofactor.

In terms of biological role, catalyzes the epimerization of various hydrophobic dipeptides, such as L-Ala-L-Phe. Has epimerase activity with L-Ala-L-Thr, L-Ala-L-Met, L-Ala-L-Tyr, as well as L-Phe-L-Met, L-Phe-L-Ser and L-Phe-L-Thr (in vitro). The polypeptide is Hydrophobic dipeptide epimerase (Citrifermentans bemidjiense (strain ATCC BAA-1014 / DSM 16622 / JCM 12645 / Bem) (Geobacter bemidjiensis)).